A 237-amino-acid polypeptide reads, in one-letter code: Pyridoxine 5'-phosphate synthase (237 aa).

N7 and R18 together coordinate 3-amino-2-oxopropyl phosphate. H43 functions as the Proton acceptor in the catalytic mechanism. 1-deoxy-D-xylulose 5-phosphate-binding residues include R45 and H50. Residue E70 is the Proton acceptor of the active site. T100 provides a ligand contact to 1-deoxy-D-xylulose 5-phosphate. H190 functions as the Proton donor in the catalytic mechanism. 3-amino-2-oxopropyl phosphate-binding positions include D191 and 213-214 (GH).

This sequence belongs to the PNP synthase family. Homooctamer; tetramer of dimers.

Its subcellular location is the cytoplasm. The enzyme catalyses 3-amino-2-oxopropyl phosphate + 1-deoxy-D-xylulose 5-phosphate = pyridoxine 5'-phosphate + phosphate + 2 H2O + H(+). Its pathway is cofactor biosynthesis; pyridoxine 5'-phosphate biosynthesis; pyridoxine 5'-phosphate from D-erythrose 4-phosphate: step 5/5. Its function is as follows. Catalyzes the complicated ring closure reaction between the two acyclic compounds 1-deoxy-D-xylulose-5-phosphate (DXP) and 3-amino-2-oxopropyl phosphate (1-amino-acetone-3-phosphate or AAP) to form pyridoxine 5'-phosphate (PNP) and inorganic phosphate. The chain is Pyridoxine 5'-phosphate synthase from Bacteroides fragilis (strain ATCC 25285 / DSM 2151 / CCUG 4856 / JCM 11019 / LMG 10263 / NCTC 9343 / Onslow / VPI 2553 / EN-2).